Reading from the N-terminus, the 156-residue chain is Snaclec rhinocetin subunit alpha (156 aa).

Residues 1 to 23 (MGRFIFLSSGWLVVFLSLSGTGA) form the signal peptide. Intrachain disulfides connect cysteine 27/cysteine 38, cysteine 55/cysteine 150, and cysteine 125/cysteine 142. Residues 34 to 151 (YEGHCYKFFF…CGDNYPFVCM (118 aa)) enclose the C-type lectin domain.

It belongs to the snaclec family. In terms of assembly, heterodimer; disulfide-linked. In terms of tissue distribution, expressed by the venom gland.

The protein resides in the secreted. In terms of biological role, antagonist of the alpha-2 subunit of the integrin alpha-2/beta-1 (ITGA2/ITGB1) on human platelets and endothelial cells. This protein inhibits collagen-stimulated activation of human platelets in a dose-dependent manner. In addition, it antagonizes the binding of monoclonal antibodies against the alpha-2 subunit of integrin alpha-2/beta-1 to platelets and it coimmunoprecipitates with this integrin. The sequence is that of Snaclec rhinocetin subunit alpha from Bitis rhinoceros (West African gaboon viper).